A 537-amino-acid polypeptide reads, in one-letter code: NEDD4-binding protein 3 (537 aa).

S172 is subject to Phosphoserine. Disordered regions lie at residues 173 to 234 (LDEG…VLSC), 328 to 361 (KELRAQQGLAPEPRTSGSSMEADPNARPEEEARW), and 423 to 458 (QEQAPREEAPGSCETDDCKSRGLLGEAGGSEAREGA). The segment covering 178 to 207 (PEPSLSDSSSGGSFGRSPGTGPSPFSSSLG) has biased composition (low complexity). The stretch at 295-501 (VERLHEVAQK…RVLRYQREIQ (207 aa)) forms a coiled coil. A compositionally biased stretch (basic and acidic residues) spans 351–361 (PNARPEEEARW).

It belongs to the N4BP3 family. In terms of assembly, binds NEDD4. Interacts with 14-3-3 proteins. Interacts with MAVS.

It is found in the cytoplasmic vesicle. The protein localises to the cell projection. Its subcellular location is the axon. It localises to the dendrite. In terms of biological role, plays a positive role in the antiviral innate immune signaling pathway. Mechanistically, interacts with MAVS and functions as a positive regulator to promote 'Lys-63'-linked polyubiquitination of MAVS and thus strengthens the interaction between MAVS and TRAF2. Also plays a role in axon and dendrite arborization during cranial nerve development. May also be important for neural crest migration and early development of other anterior structures including eye, brain and cranial cartilage. The chain is NEDD4-binding protein 3 (N4bp3) from Mus musculus (Mouse).